Consider the following 737-residue polypeptide: Serine/threonine-protein kinase dst1 (737 aa).

A Protein kinase domain is found at 29–281 (YHIQERLGKG…AKELLNHEFI (253 aa)). ATP contacts are provided by residues 35 to 43 (LGKGSFGQV) and lysine 58. Aspartate 149 serves as the catalytic Proton acceptor. 4 disordered regions span residues 305-356 (SMFE…SNNY), 372-475 (KDDA…TTDQ), 491-559 (KPIT…ISNN), and 575-631 (NNNI…ESLS). Composition is skewed to low complexity over residues 334 to 345 (NNNTVTNYSTVI), 401 to 410 (SSCSSSSSSS), 425 to 444 (PITNSPKISPISSNNINKIP), and 454 to 473 (ATTTTTTTTTTTTTAASTTT). The segment covering 491–503 (KPITSSNSTSVTP) has biased composition (polar residues). Positions 510–525 (SNNTTTTSNINTPIKP) are enriched in low complexity. 2 stretches are compositionally biased toward polar residues: residues 529–554 (LKKSNSNTPVQLKTSGDKTPTTTPLK) and 585–596 (SPTTGQKIIKTN). A compositionally biased stretch (low complexity) spans 597-615 (SGGVLKSSGGLSSKRSPSS).

The protein belongs to the protein kinase superfamily. STE Ser/Thr protein kinase family. STE20 subfamily. It depends on Mg(2+) as a cofactor.

It catalyses the reaction L-seryl-[protein] + ATP = O-phospho-L-seryl-[protein] + ADP + H(+). It carries out the reaction L-threonyl-[protein] + ATP = O-phospho-L-threonyl-[protein] + ADP + H(+). The chain is Serine/threonine-protein kinase dst1 from Dictyostelium discoideum (Social amoeba).